A 1193-amino-acid polypeptide reads, in one-letter code: Protogenin (1193 aa).

The signal sequence occupies residues 1-23 (MAPPVRPGMLPLLLLLLLPPLGS). Ig-like domains follow at residues 24-124 (VPGV…AHLT), 126-217 (STIS…ASLT), 230-317 (PTII…ATLT), and 322-406 (PSFV…ARLT). The Extracellular portion of the chain corresponds to 24-944 (VPGVWSFSEL…YYHLDQKSMT (921 aa)). 2 cysteine pairs are disulfide-bonded: cysteine 54-cysteine 107 and cysteine 150-cysteine 200. N-linked (GlcNAc...) asparagine glycosylation is present at asparagine 84. The N-linked (GlcNAc...) asparagine glycan is linked to asparagine 238. Cystine bridges form between cysteine 251–cysteine 299 and cysteine 343–cysteine 390. Fibronectin type-III domains follow at residues 416–510 (APYN…TLED), 512–608 (PLRP…TPKA), 613–712 (APKS…VRDR), 719–812 (PPHH…TLPE), and 817–912 (PPVG…VLPK). Asparagine 625 is a glycosylation site (N-linked (GlcNAc...) asparagine). Residues 945–965 (GIAVGVGIALTCILICVLILI) traverse the membrane as a helical segment. The Cytoplasmic segment spans residues 966 to 1193 (YRSKARKSSA…LRHAAESVPV (228 aa)). Disordered regions lie at residues 974-1018 (SASK…PMMP) and 1078-1193 (VLIS…SVPV). Polar residues-rich tracts occupy residues 978–990 (TTQS…SRAS) and 1086–1095 (PSSPGQTTSF). Basic and acidic residues predominate over residues 1105–1133 (DTEHSANSEGSHETGDSGRFSHESNDEIH). Residues 1136–1150 (SVISSTPPTSNSLTC) are compositionally biased toward polar residues.

The protein belongs to the immunoglobulin superfamily. DCC family.

The protein localises to the membrane. Functionally, may play a role in anteroposterior axis elongation. In Rattus norvegicus (Rat), this protein is Protogenin.